The following is a 151-amino-acid chain: D-aminoacyl-tRNA deacylase (151 aa).

A Gly-cisPro motif, important for rejection of L-amino acids motif is present at residues 142 to 143 (GP).

It belongs to the DTD family. As to quaternary structure, homodimer.

It is found in the cytoplasm. It carries out the reaction glycyl-tRNA(Ala) + H2O = tRNA(Ala) + glycine + H(+). The catalysed reaction is a D-aminoacyl-tRNA + H2O = a tRNA + a D-alpha-amino acid + H(+). In terms of biological role, an aminoacyl-tRNA editing enzyme that deacylates mischarged D-aminoacyl-tRNAs. Also deacylates mischarged glycyl-tRNA(Ala), protecting cells against glycine mischarging by AlaRS. Acts via tRNA-based rather than protein-based catalysis; rejects L-amino acids rather than detecting D-amino acids in the active site. By recycling D-aminoacyl-tRNA to D-amino acids and free tRNA molecules, this enzyme counteracts the toxicity associated with the formation of D-aminoacyl-tRNA entities in vivo and helps enforce protein L-homochirality. The chain is D-aminoacyl-tRNA deacylase from Psychrobacter cryohalolentis (strain ATCC BAA-1226 / DSM 17306 / VKM B-2378 / K5).